Consider the following 129-residue polypeptide: Small ribosomal subunit protein uS11 (129 aa).

The protein belongs to the universal ribosomal protein uS11 family. Part of the 30S ribosomal subunit. Interacts with proteins S7 and S18. Binds to IF-3.

Functionally, located on the platform of the 30S subunit, it bridges several disparate RNA helices of the 16S rRNA. Forms part of the Shine-Dalgarno cleft in the 70S ribosome. This is Small ribosomal subunit protein uS11 from Rhodopseudomonas palustris (strain BisB18).